Here is a 460-residue protein sequence, read N- to C-terminus: Probable protein phosphatase 2C 38 (460 aa).

Disordered regions lie at residues 1-30 and 83-111; these read MVAVTGGRPPGLQDAPGAPPPAPAAEAVPS and RPMRRRRRGGSSSSSSSPRDREPRDGRIA. Over residues 100–109 the composition is skewed to basic and acidic residues; it reads PRDREPRDGR. Residues 118-432 enclose the PPM-type phosphatase domain; sequence AASLYTMRGN…DDCAVVCLFL (315 aa). Mn(2+)-binding residues include aspartate 154 and glycine 155. The tract at residues 192–219 is disordered; the sequence is VTSSMTEGGGTERMDRDTETPLGTEENG. The segment covering 201-210 has biased composition (basic and acidic residues); the sequence is GTERMDRDTE. Positions 377 and 423 each coordinate Mn(2+).

The protein belongs to the PP2C family. Mg(2+) serves as cofactor. The cofactor is Mn(2+).

The enzyme catalyses O-phospho-L-seryl-[protein] + H2O = L-seryl-[protein] + phosphate. It catalyses the reaction O-phospho-L-threonyl-[protein] + H2O = L-threonyl-[protein] + phosphate. The chain is Probable protein phosphatase 2C 38 from Oryza sativa subsp. japonica (Rice).